Here is a 594-residue protein sequence, read N- to C-terminus: Grainyhead-like protein 3 homolog (594 aa).

2 transcription activation regions span residues 25–75 (NDDE…RIIT) and 28–91 (EAWS…SCIE). One can recognise a Grh/CP2 DB domain in the interval 220–453 (ANRDFECTLE…DMETHPVLFI (234 aa)). Positions 483–503 (SSQSFPESFEAPPSKQQTNED) are disordered.

It belongs to the grh/CP2 family. Grainyhead subfamily.

It localises to the nucleus. Its function is as follows. Transcription factor playing important roles in primary neurulation and in the differentiation of stratified epithelia of both ectodermal and endodermal origin. Binds directly to the consensus DNA sequence 5'-AACCGGTT-3' acting as an activator and repressor on distinct target genes. The polypeptide is Grainyhead-like protein 3 homolog (grhl3) (Xenopus tropicalis (Western clawed frog)).